Reading from the N-terminus, the 259-residue chain is Keratinocyte-associated transmembrane protein 2 (259 aa).

A signal peptide spans 1 to 44; the sequence is MAASALGRMCGAAREKLSPGPGARGLGALARSLVLALLLVPVLC. Residues 45-190 are Extracellular-facing; it reads SDRSENPPNN…VKLPPPNRED (146 aa). The interval 47 to 155 is disordered; it reads RSENPPNNAT…YDWTTNPRDE (109 aa). The segment covering 50–81 has biased composition (polar residues); it reads NPPNNATVSSPVVVTAPGNHTSPSVSQISTTL. Residues Asn-54 and Asn-68 are each glycosylated (N-linked (GlcNAc...) asparagine). Positions 82–104 are enriched in low complexity; it reads SPASAEKSGSSSAAPTPTAAPSA. Residues 105-122 are compositionally biased toward acidic residues; sequence PEEEADSNEDPSMEEEDL. Ser-165 is subject to Phosphoserine. A helical membrane pass occupies residues 191 to 211; that stretch reads SHFFFHLLIFAFCAAVVYVTY. At 212–259 the chain is on the cytoplasmic side; that stretch reads HNKRKIFLLVQSRKWRDGLCSKTVEYHRLDQNVNEAMPSLKITNDYIF. Phosphoserine occurs at positions 223 and 250.

It is found in the membrane. The sequence is that of Keratinocyte-associated transmembrane protein 2 (Kct2) from Mus musculus (Mouse).